Here is a 201-residue protein sequence, read N- to C-terminus: Recombination protein RecR (201 aa).

The C4-type zinc-finger motif lies at 57 to 72 (CADCRTFTEQEVCNIC). A Toprim domain is found at 81–176 (GQICVVESPA…EASRIAHGVP (96 aa)).

The protein belongs to the RecR family.

May play a role in DNA repair. It seems to be involved in an RecBC-independent recombinational process of DNA repair. It may act with RecF and RecO. The polypeptide is Recombination protein RecR (Escherichia coli O17:K52:H18 (strain UMN026 / ExPEC)).